Consider the following 320-residue polypeptide: Probable trehalose-phosphate phosphatase C (320 aa).

This sequence belongs to the trehalose phosphatase family. A divalent metal cation is required as a cofactor.

The enzyme catalyses alpha,alpha-trehalose 6-phosphate + H2O = alpha,alpha-trehalose + phosphate. Its pathway is glycan biosynthesis; trehalose biosynthesis. Functionally, removes the phosphate from trehalose 6-phosphate to produce free trehalose. Trehalose accumulation in plant may improve abiotic stress tolerance. The polypeptide is Probable trehalose-phosphate phosphatase C (TPPC) (Arabidopsis thaliana (Mouse-ear cress)).